A 567-amino-acid chain; its full sequence is Thiol:disulfide interchange protein DsbD (567 aa).

An N-terminal signal peptide occupies residues 1-19; sequence MAQRIFTLILLLCSTSAFA. Disulfide bonds link cysteine 122-cysteine 128 and cysteine 185-cysteine 307. The next 7 membrane-spanning stretches (helical) occupy residues 170–192, 212–234, 246–268, 297–319, 326–348, 358–380, and 387–409; these read ALWALLIGIGIAFTPCVLPMYPL, LAFIYVQGMALTYTALGLVVAAA, YVLIGLAIVFTLLALSMFGLFTL, GAIAGLICSPCTTAPLSAILLYI, WLGGGTLYLYALGMGLPLMLVTV, GPWMAHVKTAFGFVILALPVFLL, and AWGLRLWSLLGVAFFGWAFITSL. A Thioredoxin domain is found at 435–567; sequence QDWAFGSPSA…FSAHLHDRQP (133 aa). Residues cysteine 482 and cysteine 485 are joined by a disulfide bond.

Belongs to the thioredoxin family. DsbD subfamily.

Its subcellular location is the cell inner membrane. The catalysed reaction is [protein]-dithiol + NAD(+) = [protein]-disulfide + NADH + H(+). It catalyses the reaction [protein]-dithiol + NADP(+) = [protein]-disulfide + NADPH + H(+). Functionally, required to facilitate the formation of correct disulfide bonds in some periplasmic proteins and for the assembly of the periplasmic c-type cytochromes. Acts by transferring electrons from cytoplasmic thioredoxin to the periplasm. This transfer involves a cascade of disulfide bond formation and reduction steps. The sequence is that of Thiol:disulfide interchange protein DsbD from Salmonella typhi.